The sequence spans 375 residues: Protein RecA (375 aa).

G88–T95 contributes to the ATP binding site.

Belongs to the RecA family.

The protein localises to the cytoplasm. In terms of biological role, can catalyze the hydrolysis of ATP in the presence of single-stranded DNA, the ATP-dependent uptake of single-stranded DNA by duplex DNA, and the ATP-dependent hybridization of homologous single-stranded DNAs. It interacts with LexA causing its activation and leading to its autocatalytic cleavage. The sequence is that of Protein RecA from Rhodopirellula baltica (strain DSM 10527 / NCIMB 13988 / SH1).